The following is a 337-amino-acid chain: Ketol-acid reductoisomerase (NADP(+)) (337 aa).

The region spanning 1–180 (MKIYYDTDVN…GGGRAGIIET (180 aa)) is the KARI N-terminal Rossmann domain. NADP(+) contacts are provided by residues 24 to 27 (YGSQ), Arg-47, Ser-51, and 81 to 84 (DELQ). Residue His-106 is part of the active site. Gly-132 serves as a coordination point for NADP(+). In terms of domain architecture, KARI C-terminal knotted spans 181-326 (TFKDETETDL…EKLRAMMPWL (146 aa)). Residues Asp-189, Glu-193, Glu-225, and Glu-229 each contribute to the Mg(2+) site. Ser-250 serves as a coordination point for substrate.

The protein belongs to the ketol-acid reductoisomerase family. It depends on Mg(2+) as a cofactor.

The enzyme catalyses (2R)-2,3-dihydroxy-3-methylbutanoate + NADP(+) = (2S)-2-acetolactate + NADPH + H(+). The catalysed reaction is (2R,3R)-2,3-dihydroxy-3-methylpentanoate + NADP(+) = (S)-2-ethyl-2-hydroxy-3-oxobutanoate + NADPH + H(+). It participates in amino-acid biosynthesis; L-isoleucine biosynthesis; L-isoleucine from 2-oxobutanoate: step 2/4. The protein operates within amino-acid biosynthesis; L-valine biosynthesis; L-valine from pyruvate: step 2/4. Functionally, involved in the biosynthesis of branched-chain amino acids (BCAA). Catalyzes an alkyl-migration followed by a ketol-acid reduction of (S)-2-acetolactate (S2AL) to yield (R)-2,3-dihydroxy-isovalerate. In the isomerase reaction, S2AL is rearranged via a Mg-dependent methyl migration to produce 3-hydroxy-3-methyl-2-ketobutyrate (HMKB). In the reductase reaction, this 2-ketoacid undergoes a metal-dependent reduction by NADPH to yield (R)-2,3-dihydroxy-isovalerate. This chain is Ketol-acid reductoisomerase (NADP(+)), found in Thermodesulfovibrio yellowstonii (strain ATCC 51303 / DSM 11347 / YP87).